A 320-amino-acid chain; its full sequence is Cytochrome f (320 aa).

A signal peptide spans 1 to 35 (MQTRNTFSWIREEITRSISVSLMIYIITWASISSA). Heme-binding residues include Tyr-36, Cys-56, Cys-59, and His-60. A helical transmembrane segment spans residues 286–306 (VQGLLFFLGSVVLAQIFLVLK).

Belongs to the cytochrome f family. As to quaternary structure, the 4 large subunits of the cytochrome b6-f complex are cytochrome b6, subunit IV (17 kDa polypeptide, petD), cytochrome f and the Rieske protein, while the 4 small subunits are PetG, PetL, PetM and PetN. The complex functions as a dimer. It depends on heme as a cofactor.

Its subcellular location is the plastid. It localises to the chloroplast thylakoid membrane. In terms of biological role, component of the cytochrome b6-f complex, which mediates electron transfer between photosystem II (PSII) and photosystem I (PSI), cyclic electron flow around PSI, and state transitions. The chain is Cytochrome f from Barbarea verna (Land cress).